Reading from the N-terminus, the 230-residue chain is 5'-methylthioadenosine/S-adenosylhomocysteine nucleosidase (230 aa).

Glu12 (proton acceptor) is an active-site residue. Substrate-binding positions include Gly78, Met153, and Met174–Glu175. Catalysis depends on Asp198, which acts as the Proton donor.

This sequence belongs to the PNP/UDP phosphorylase family. MtnN subfamily.

The catalysed reaction is S-adenosyl-L-homocysteine + H2O = S-(5-deoxy-D-ribos-5-yl)-L-homocysteine + adenine. It carries out the reaction S-methyl-5'-thioadenosine + H2O = 5-(methylsulfanyl)-D-ribose + adenine. The enzyme catalyses 5'-deoxyadenosine + H2O = 5-deoxy-D-ribose + adenine. Its pathway is amino-acid biosynthesis; L-methionine biosynthesis via salvage pathway; S-methyl-5-thio-alpha-D-ribose 1-phosphate from S-methyl-5'-thioadenosine (hydrolase route): step 1/2. Its function is as follows. Catalyzes the irreversible cleavage of the glycosidic bond in both 5'-methylthioadenosine (MTA) and S-adenosylhomocysteine (SAH/AdoHcy) to adenine and the corresponding thioribose, 5'-methylthioribose and S-ribosylhomocysteine, respectively. Also cleaves 5'-deoxyadenosine, a toxic by-product of radical S-adenosylmethionine (SAM) enzymes, into 5-deoxyribose and adenine. The protein is 5'-methylthioadenosine/S-adenosylhomocysteine nucleosidase of Tolumonas auensis (strain DSM 9187 / NBRC 110442 / TA 4).